The primary structure comprises 116 residues: Large ribosomal subunit protein bL19 (116 aa).

It belongs to the bacterial ribosomal protein bL19 family.

This protein is located at the 30S-50S ribosomal subunit interface and may play a role in the structure and function of the aminoacyl-tRNA binding site. This chain is Large ribosomal subunit protein bL19, found in Blochmanniella pennsylvanica (strain BPEN).